Reading from the N-terminus, the 751-residue chain is MTSTGRFTLPSEENFAEKTKELAELWGADAIRNSDGTHLDEAVLALGKKIYNAYFPTRAHNEWITLHMDETPQVYLLTDRILAESDTVDIPLMESFFAEQLKPNRDADPHKYWEVVDRTTGEVVDSANWTLDADEDTVHVSGVAAWHEYTVSFLAYIIWDPVEMYNHLTNDWGDKEHEIPFDIYHPATRKFVFDTFEQWLKDSPQTDVVRFTTFFYQFTLLFDEKRREKVVDWFGCACTVSPRALDDFEAKYGYRLRPEDFVDGGAYNSAWRVPRKAQRDWIDFLSGFVRENVKQLADMSHAAGKEAMMFLGDQWIGTEPYKDGFDELGLDAVVGSIGDGTTTRMIADIPGVKYTEGRFLPYFFPDTFYEGNDPSIEGLDNWRKARRAILRSPISRMGYGGYLSLAAKFPKFVDTVTHIANEFRDIHDRTGGVAAEGELNVAILNSWGKMRSWMAFTVAHALPNKQTYSYYGILESLSGMRVNVRFISFDDVLAHGIDSDIDVIINGGPVDTAFTGGDVWTNPKLVETVRAWVRGGGAFVGVGEPSSAPRFQTGRFFQLADVIGVDEERYQTLSVDKYFPPVVPDHFITADVPVDPAAREAWEQAGYRIPLSGCGGGQSIKPLGGIDFGEPVLNTYPVNENVTLLRADGGQVQLATNDYGKGRGVYISGLPYSAANARLLERVLFYASHNEDKYAAWSSSNPECEVAHFPEQGLYCVINNTDQPQKTTVTLADGTTEDFDLPDSGIAWREA.

The active-site Proton donor is Asp-313.

This sequence belongs to the glycoside hydrolase 112 family. As to quaternary structure, homodimer.

It catalyses the reaction beta-D-galactosyl-(1-&gt;3)-N-acetyl-D-glucosamine + phosphate = alpha-D-galactose 1-phosphate + N-acetyl-D-glucosamine. Functionally, reversibly phosphorolyzes lacto-N-biose to Gal1-P and N-acetylglucosamine (GlcNAc) and galacto-N-biose to Gal1-P and N-acetylgalactosamine (GalNAc). Involved in the lacto-N-biose I/galacto-N-biose (LNB/GNB) degradation pathway, which is important for host intestinal colonization by bifidobacteria. The chain is 1,3-beta-galactosyl-N-acetylhexosamine phosphorylase (lnpA) from Bifidobacterium longum subsp. longum (strain ATCC 15707 / DSM 20219 / JCM 1217 / NCTC 11818 / E194b).